Here is a 342-residue protein sequence, read N- to C-terminus: Farnesyl pyrophosphate synthase 1 (342 aa).

Isopentenyl diphosphate-binding residues include Lys47, Arg50, and Gln86. Residues Asp93 and Asp97 each contribute to the Mg(2+) site. Arg102 lines the dimethylallyl diphosphate pocket. An isopentenyl diphosphate-binding site is contributed by Arg103. Positions 190, 191, 229, 246, and 255 each coordinate dimethylallyl diphosphate.

The protein belongs to the FPP/GGPP synthase family. It depends on Mg(2+) as a cofactor.

It is found in the cytoplasm. The catalysed reaction is isopentenyl diphosphate + dimethylallyl diphosphate = (2E)-geranyl diphosphate + diphosphate. It catalyses the reaction isopentenyl diphosphate + (2E)-geranyl diphosphate = (2E,6E)-farnesyl diphosphate + diphosphate. The protein operates within isoprenoid biosynthesis; farnesyl diphosphate biosynthesis; farnesyl diphosphate from geranyl diphosphate and isopentenyl diphosphate: step 1/1. Its pathway is isoprenoid biosynthesis; geranyl diphosphate biosynthesis; geranyl diphosphate from dimethylallyl diphosphate and isopentenyl diphosphate: step 1/1. Its function is as follows. Catalyzes the sequential condensation of isopentenyl pyrophosphate with the allylic pyrophosphates, dimethylallyl pyrophosphate, and then with the resultant geranylpyrophosphate to the ultimate product farnesyl pyrophosphate. This Lupinus albus (White lupine) protein is Farnesyl pyrophosphate synthase 1 (FPS1).